Reading from the N-terminus, the 40-residue chain is Photosystem II reaction center protein J (40 aa).

Residues 8–28 (IPLWLVGTVAGILVIGLIGIF) form a helical membrane-spanning segment.

It belongs to the PsbJ family. As to quaternary structure, PSII is composed of 1 copy each of membrane proteins PsbA, PsbB, PsbC, PsbD, PsbE, PsbF, PsbH, PsbI, PsbJ, PsbK, PsbL, PsbM, PsbT, PsbX, PsbY, PsbZ, Psb30/Ycf12, at least 3 peripheral proteins of the oxygen-evolving complex and a large number of cofactors. It forms dimeric complexes.

The protein resides in the plastid. It is found in the chloroplast thylakoid membrane. Functionally, one of the components of the core complex of photosystem II (PSII). PSII is a light-driven water:plastoquinone oxidoreductase that uses light energy to abstract electrons from H(2)O, generating O(2) and a proton gradient subsequently used for ATP formation. It consists of a core antenna complex that captures photons, and an electron transfer chain that converts photonic excitation into a charge separation. The chain is Photosystem II reaction center protein J from Gnetum parvifolium (Small-leaved jointfir).